The chain runs to 433 residues: Cyclin-dependent kinase 15 (433 aa).

The tract at residues 46-83 is disordered; the sequence is ASSSTASFHPRGLEAASAQKLKSKRPRSNSDSFQEENL. Positions 52–336 constitute a Protein kinase domain; the sequence is SFHPRGLEAA…SKLPNYNPEW (285 aa). Residues 58 to 66 and E81 contribute to the ATP site; that span reads LEAASAQKL. T173 functions as the Proton acceptor in the catalytic mechanism.

It belongs to the protein kinase superfamily. CMGC Ser/Thr protein kinase family. CDC2/CDKX subfamily. Mg(2+) is required as a cofactor.

It carries out the reaction L-seryl-[protein] + ATP = O-phospho-L-seryl-[protein] + ADP + H(+). The enzyme catalyses L-threonyl-[protein] + ATP = O-phospho-L-threonyl-[protein] + ADP + H(+). Serine/threonine-protein kinase that acts like an antiapoptotic protein that counters TRAIL/TNFSF10-induced apoptosis by inducing phosphorylation of BIRC5 at 'Thr-34'. The sequence is that of Cyclin-dependent kinase 15 (Cdk15) from Mus musculus (Mouse).